The sequence spans 1020 residues: Probable leucine-rich repeat receptor-like serine/threonine-protein kinase At3g14840 (1020 aa).

The first 26 residues, 1 to 26 (MSLNRQLLFTYYFIVSLILFSDFVSS), serve as a signal peptide directing secretion. Topologically, residues 27-614 (ATLPKEEVDA…GTGGGSSVGT (588 aa)) are extracellular. 2 N-linked (GlcNAc...) asparagine glycosylation sites follow: Asn-50 and Asn-81. 10 LRR repeats span residues 86 to 110 (ICHV…LSGL), 111 to 134 (PFLQ…WGAS), 136 to 157 (LLNI…LGNL), 158 to 181 (TTLS…LGNL), 182 to 204 (PNLK…TFAK), 206 to 231 (TTLT…NWKG), 253 to 276 (LGTL…PLRN), 277 to 301 (MTSM…LGQN), 302 to 324 (RKLK…TYSG), and 326 to 349 (SDVD…MVDQ). Residues Asn-124, Asn-138, and Asn-156 are each glycosylated (N-linked (GlcNAc...) asparagine). Asn-193 is a glycosylation site (N-linked (GlcNAc...) asparagine). Residues Asn-276 and Asn-289 are each glycosylated (N-linked (GlcNAc...) asparagine). N-linked (GlcNAc...) asparagine glycans are attached at residues Asn-359, Asn-386, Asn-389, Asn-417, Asn-461, Asn-469, and Asn-498. The LRR 11 repeat unit spans residues 479 to 501 (QARLSAISLTYQALCLGKGNYTV). A helical membrane pass occupies residues 615–635 (VVGSVIASTVFLVLLIGGILW). Topologically, residues 636–1020 (WRGCLRPKSQ…LDSAYWNTRT (385 aa)) are cytoplasmic. Residues 672–949 (FDPANKIGEG…VSMLEGHSTV (278 aa)) enclose the Protein kinase domain. Residues 678-686 (IGEGGFGPV) and Lys-700 contribute to the ATP site. Residue Tyr-745 is modified to Phosphotyrosine. The active-site Proton acceptor is the Asp-798. Ser-831 bears the Phosphoserine mark. Thr-832 and Thr-837 each carry phosphothreonine. A Phosphotyrosine modification is found at Tyr-845.

The protein belongs to the protein kinase superfamily. Ser/Thr protein kinase family.

It localises to the cell membrane. It carries out the reaction L-seryl-[protein] + ATP = O-phospho-L-seryl-[protein] + ADP + H(+). It catalyses the reaction L-threonyl-[protein] + ATP = O-phospho-L-threonyl-[protein] + ADP + H(+). This Arabidopsis thaliana (Mouse-ear cress) protein is Probable leucine-rich repeat receptor-like serine/threonine-protein kinase At3g14840 (LRR-RLK).